The following is a 37-amino-acid chain: MKVLASVKRICRNCKIIKRKGVVRVICIEPRHKQRQG.

Belongs to the bacterial ribosomal protein bL36 family.

In Janthinobacterium sp. (strain Marseille) (Minibacterium massiliensis), this protein is Large ribosomal subunit protein bL36.